Consider the following 224-residue polypeptide: Small ribosomal subunit protein uS3c (224 aa).

One can recognise a KH type-2 domain in the interval 43-124 (IKNYIQKNRK…RLNIAIEKVK (82 aa)).

It belongs to the universal ribosomal protein uS3 family. In terms of assembly, part of the 30S ribosomal subunit.

It is found in the plastid. Its subcellular location is the chloroplast. The sequence is that of Small ribosomal subunit protein uS3c (rps3) from Saccharum hybrid (Sugarcane).